Reading from the N-terminus, the 297-residue chain is tRNA pseudouridine synthase B (297 aa).

The Nucleophile role is filled by Asp-39.

Belongs to the pseudouridine synthase TruB family. Type 1 subfamily.

It catalyses the reaction uridine(55) in tRNA = pseudouridine(55) in tRNA. Its function is as follows. Responsible for synthesis of pseudouridine from uracil-55 in the psi GC loop of transfer RNAs. This Lactobacillus gasseri (strain ATCC 33323 / DSM 20243 / BCRC 14619 / CIP 102991 / JCM 1131 / KCTC 3163 / NCIMB 11718 / NCTC 13722 / AM63) protein is tRNA pseudouridine synthase B.